The sequence spans 136 residues: Small ribosomal subunit protein uS8 (136 aa).

The protein belongs to the universal ribosomal protein uS8 family. As to quaternary structure, part of the 30S ribosomal subunit. Contacts proteins S5 and S12.

In terms of biological role, one of the primary rRNA binding proteins, it binds directly to 16S rRNA central domain where it helps coordinate assembly of the platform of the 30S subunit. This is Small ribosomal subunit protein uS8 from Persephonella marina (strain DSM 14350 / EX-H1).